A 621-amino-acid polypeptide reads, in one-letter code: Chaperone protein HscA homolog (621 aa).

It belongs to the heat shock protein 70 family.

Its function is as follows. Chaperone involved in the maturation of iron-sulfur cluster-containing proteins. Has a low intrinsic ATPase activity which is markedly stimulated by HscB. The sequence is that of Chaperone protein HscA homolog from Cupriavidus taiwanensis (strain DSM 17343 / BCRC 17206 / CCUG 44338 / CIP 107171 / LMG 19424 / R1) (Ralstonia taiwanensis (strain LMG 19424)).